A 317-amino-acid chain; its full sequence is uncharacterized protein (317 aa).

The next 7 membrane-spanning stretches (helical) occupy residues 18–38 (WWII…LIII), 58–78 (IIFG…GFIF), 92–112 (FLGH…WWSV), 130–150 (LFAT…AFGV), 165–185 (QPLS…KGEL), 202–222 (LAFL…LSTV), and 253–273 (LWGG…LMVN).

It belongs to the CbiQ family.

Its subcellular location is the cell membrane. This is an uncharacterized protein from Mycoplasma pneumoniae (strain ATCC 29342 / M129 / Subtype 1) (Mycoplasmoides pneumoniae).